A 245-amino-acid chain; its full sequence is Lytic switch protein BZLF1 (245 aa).

Residues 1–167 (MMDPNSTSED…RTRKPQQPES (167 aa)) form a transactivation region. 2 positions are modified to phosphothreonine; by host: Thr14 and Thr159. Positions 157 to 194 (RRTRKPQQPESLEECDSELEIKRYKNRVASRKCRAKFK) match the Bipartite nuclear localization signal motif. Phosphoserine; by host is present on residues Ser167, Ser173, and Ser186. The 59-residue stretch at 170–228 (ECDSELEIKRYKNRVASRKCRAKFKQLLQHYREVAAAKSSENDRLRLLLKQMCPSLDVD) folds into the bZIP domain. The interval 178–195 (KRYKNRVASRKCRAKFKQ) is basic motif. Residues 196-228 (LLQHYREVAAAKSSENDRLRLLLKQMCPSLDVD) are leucine-zipper. Residues 229-245 (SIIPRTPDVLHEDLLNF) are accessory activation domain.

The protein belongs to the bZIP family. In terms of assembly, homodimer. Interacts (via b-ZIP domain) with the DNA polymerase processivity factor BMRF1 (via N-terminus); this interaction may inhibit BZLF1-induced transcription of the BMRF1 promoter. Interacts with human UBN1, CRTC2 and RACK1. Interacts (via N-terminus) with human PAX5 (via N-terminus); this interaction inhibits BZLF1-mediated lytic viral reactivation. Interacts (via leucine-zipper domain) with host CEBPA; this interaction induces G1 host cell cycle arrest. Interacts (via C-terminus) with host TP53BP1 (via C-terminus); this interaction is involved in the activation of the viral lytic cycle. Interacts with host chromatin-remodeling ATPase INO80; this interaction participates to the activation of early lytic viral genes by BZLF1. Interacts with host regulator of chromatin SMARCA5/hSNF2H; this interaction participates to the activation of early lytic viral genes by BZLF1. Interacts with host PLSCR1/Phospholipid scramblase 1; this interaction negatively regulates the transcriptional regulatory activity of BZLF1 by preventing the formation of the BZLF1-CBP complex.

The protein resides in the host nucleus. Transcription factor that acts as a molecular switch to induce the transition from the latent to the lytic or productive phase of the virus cycle. Mediates the switch from the latent to the lytic cycle of infection in cells containing a highly methylated viral genome. Probably binds to silenced chromatin and recruits host chromatin-remodeling enzymes. Regulates this switch by binding to 2 types of ZEBRA response elements (ZREs): the CpG-free AP-1 like elements (latency) and the methylated CpG-containing elements (lytic replication). Activates preferentially the methylated forms of the viral lytic R (BRLF1) and Na (BRRF1) gene promoters, the latters being the first genes activated during Z-mediated reactivation in latently infected cells. BZLF1 and BRLF1 act together to trigger lytic replication. Also binds the lytic origin of replication, oriLyt. Induces G1 cell cycle arrest by stabilizing the host CCAAT/enhancer binding protein CEBPA. This function is important because the lytic cycle preferentially takes place in host cells arrested in G1. This chain is Lytic switch protein BZLF1, found in Epstein-Barr virus (strain B95-8) (HHV-4).